The following is a 173-amino-acid chain: MKQQLLLLEDVDGLGRSGDIVTARPGYVRNYLLPQKKAIIAGAGTLRLQAKLKEERLLRAAEDRAESEKLAELLKDLVLEFQVRVDPDNNMYGSVTISDIIAEAAKKNVILTRKNFPNAHYAIKNLGKKSVPLKLKEGVTATLFVEVSSESAYIAVLNQQSSQEQTVAAEELE.

It belongs to the bacterial ribosomal protein bL9 family.

Functionally, binds to the 23S rRNA. The protein is Large ribosomal subunit protein bL9 of Chlamydia felis (strain Fe/C-56) (Chlamydophila felis).